Reading from the N-terminus, the 333-residue chain is Fructose-1,6-bisphosphatase class 1 (333 aa).

Mg(2+) contacts are provided by Glu92, Asp113, Leu115, and Asp116. Residues 116 to 119, Asn209, Tyr242, and Lys272 each bind substrate; that span reads DGSS. Glu278 contacts Mg(2+).

Belongs to the FBPase class 1 family. In terms of assembly, homotetramer. Requires Mg(2+) as cofactor.

It is found in the cytoplasm. The enzyme catalyses beta-D-fructose 1,6-bisphosphate + H2O = beta-D-fructose 6-phosphate + phosphate. It functions in the pathway carbohydrate biosynthesis; Calvin cycle. The sequence is that of Fructose-1,6-bisphosphatase class 1 from Chlorobaculum tepidum (strain ATCC 49652 / DSM 12025 / NBRC 103806 / TLS) (Chlorobium tepidum).